Reading from the N-terminus, the 98-residue chain is NADH-ubiquinone oxidoreductase chain 4L (98 aa).

3 helical membrane passes run 1-21, 29-49, and 61-81; these read MSLV…GLLM, SLLC…LTIL, and IILL…LVMV.

This sequence belongs to the complex I subunit 4L family. Core subunit of respiratory chain NADH dehydrogenase (Complex I) which is composed of 45 different subunits.

Its subcellular location is the mitochondrion inner membrane. It catalyses the reaction a ubiquinone + NADH + 5 H(+)(in) = a ubiquinol + NAD(+) + 4 H(+)(out). Its function is as follows. Core subunit of the mitochondrial membrane respiratory chain NADH dehydrogenase (Complex I) which catalyzes electron transfer from NADH through the respiratory chain, using ubiquinone as an electron acceptor. Part of the enzyme membrane arm which is embedded in the lipid bilayer and involved in proton translocation. In Elaphodus cephalophus (Tufted deer), this protein is NADH-ubiquinone oxidoreductase chain 4L (MT-ND4L).